A 648-amino-acid polypeptide reads, in one-letter code: Proton myo-inositol cotransporter (648 aa).

Topologically, residues 1–76 (MSRKASENVE…AARRQFQQDE (76 aa)) are cytoplasmic. Phosphoserine occurs at positions 6, 47, and 50. Residues 77-97 (TPAFVYVVAVFSALGGFLFGY) traverse the membrane as a helical segment. Over 98 to 125 (DTGVVSGAMLLLKRQLSLDALWQELLVS) the chain is Extracellular. The chain crosses the membrane as a helical span at residues 126–146 (STVGAAAVSALAGGALNGVFG). The Cytoplasmic portion of the chain corresponds to 147-148 (RR). The helical transmembrane segment at 149–169 (AAILLASALFTAGSAVLAAAN) threads the bilayer. Over 170-178 (NKETLLAGR) the chain is Extracellular. The helical transmembrane segment at 179–199 (LVVGLGIGIASMTVPVYIAEV) threads the bilayer. The Cytoplasmic portion of the chain corresponds to 200–212 (SPPNLRGRLVTIN). A helical transmembrane segment spans residues 213–233 (TLFITGGQFFASVVDGAFSYL). Over 234-239 (QKDGWR) the chain is Extracellular. A helical transmembrane segment spans residues 240–260 (YMLGLAAVPAVIQFFGFLFLP). Residues 261–324 (ESPRWLIQKG…RMLSYPPTRR (64 aa)) lie on the Cytoplasmic side of the membrane. A helical transmembrane segment spans residues 325–345 (ALIVGCGLQMFQQLSGINTIM). Residues 346–363 (YYSATILQMSGVEDDRLA) are Extracellular-facing. Residues 364-384 (IWLASVTAFTNFIFTLVGVWL) form a helical membrane-spanning segment. The Cytoplasmic segment spans residues 385–393 (VEKVGRRKL). Residues 394–414 (TFGSLAGTTVALIILALGFVL) traverse the membrane as a helical segment. At 415–508 (SAQVSPRITF…NFCPTPYSWT (94 aa)) the chain is on the extracellular side. N-linked (GlcNAc...) asparagine glycosylation is found at asparagine 433, asparagine 458, and asparagine 485. The chain crosses the membrane as a helical span at residues 509–529 (ALLGLILYLVFFAPGMGPMPW). Topologically, residues 530 to 549 (TVNSEIYPLWARSTGNACSS) are cytoplasmic. The chain crosses the membrane as a helical span at residues 550 to 570 (GINWIFNVLVSLTFLHTAEYL). Residues 571 to 573 (TYY) lie on the Extracellular side of the membrane. A helical transmembrane segment spans residues 574–594 (GAFFLYAGFAAVGLLFIYGCL). Residues 595–648 (PETKGKKLEEIESLFDNRLCTCGTSDSDEGRYIEYIRVKGSNYHLSDNDASDVE) are Cytoplasmic-facing. A phosphoserine mark is found at serine 640 and serine 645.

This sequence belongs to the major facilitator superfamily. Sugar transporter (TC 2.A.1.1) family. In terms of processing, glycosylated. As to expression, predominantly expressed in the brain.

The protein resides in the cell membrane. The catalysed reaction is myo-inositol(out) + H(+)(out) = myo-inositol(in) + H(+)(in). Its function is as follows. H(+)-myo-inositol cotransporter. Can also transport related stereoisomers. The polypeptide is Proton myo-inositol cotransporter (Homo sapiens (Human)).